A 453-amino-acid polypeptide reads, in one-letter code: Carbamoyl phosphate synthase arginine-specific small chain (453 aa).

A mitochondrion-targeting transit peptide spans 1–13; that stretch reads MFSKLAANFAQRA. One can recognise a Glutamine amidotransferase type-1 domain in the interval 233–420; sequence HVALIDCGVK…LENVRAAKSA (188 aa). C309 acts as the Nucleophile in catalysis. Active-site residues include H393 and E395.

It belongs to the CarA family. As to quaternary structure, heterodimer composed of 2 chains; the small (or glutamine) chain promotes the hydrolysis of glutamine to ammonia, which is used by the large (or ammonia) chain to synthesize carbamoyl phosphate.

It is found in the mitochondrion matrix. It catalyses the reaction hydrogencarbonate + L-glutamine + 2 ATP + H2O = carbamoyl phosphate + L-glutamate + 2 ADP + phosphate + 2 H(+). It carries out the reaction L-glutamine + H2O = L-glutamate + NH4(+). The protein operates within amino-acid biosynthesis; L-arginine biosynthesis; carbamoyl phosphate from bicarbonate: step 1/1. Functionally, small subunit of the arginine-specific carbamoyl phosphate synthase (CPSase). CPSase catalyzes the formation of carbamoyl phosphate from the ammonia moiety of glutamine, carbonate, and phosphate donated by ATP, the first step of the arginine biosynthetic pathway. The small subunit (glutamine amidotransferase) binds and cleaves glutamine to supply the large subunit with the substrate ammonia. The protein is Carbamoyl phosphate synthase arginine-specific small chain (cpa1) of Hypocrea virens (Gliocladium virens).